Here is a 1330-residue protein sequence, read N- to C-terminus: Nephrocystin-3 (1330 aa).

Gly-2 is lipidated: N-myristoyl glycine. Positions 83 to 207 (ELEYAAAEYE…QRLQAQGIQV (125 aa)) form a coiled coil. TPR repeat units lie at residues 471 to 504 (IPEE…AHEL), 885 to 918 (CLLN…KSAM), 920 to 942 (TEYF…MSCL), 943 to 976 (ADLY…RETA), 985 to 1018 (AQSL…SENA), 1027 to 1060 (AREL…HQKA), 1093 to 1126 (ARTL…RERV), 1135 to 1168 (AQSL…RRRA), 1177 to 1210 (AYTV…RQKS), 1219 to 1252 (ATAL…YEDS), and 1261 to 1294 (GETL…KEAE). A disordered region spans residues 1296 to 1330 (SLLGGKAPSRHSSSGDTFSLKTAHSPNVFLQQGQR). The span at 1305-1330 (RHSSSGDTFSLKTAHSPNVFLQQGQR) shows a compositional bias: polar residues.

Interacts with NPHP1 and INVS/NPHP2. Interacts (when myristoylated) with UNC119 and UNC119B; interaction is required for localization to cilium. Interacts with CEP164. Component of a complex containing at least ANKS6, INVS, NEK8 and NPHP3. ANKS6 may organize complex assembly by linking INVS and NPHP3 to NEK8 and INVS may target the complex to the proximal ciliary axoneme. As to expression, widely expressed at low level. Expressed in heart, placenta, liver, skeletal muscle, kidney and pancreas. Expressed at very low level in brain and lung.

It localises to the cell projection. The protein resides in the cilium. Functionally, required for normal ciliary development and function. Inhibits disheveled-1-induced canonical Wnt-signaling activity and may also play a role in the control of non-canonical Wnt signaling which regulates planar cell polarity. Probably acts as a molecular switch between different Wnt signaling pathways. Required for proper convergent extension cell movements. The sequence is that of Nephrocystin-3 (NPHP3) from Homo sapiens (Human).